Here is a 66-residue protein sequence, read N- to C-terminus: Large ribosomal subunit protein bL35 (66 aa).

It belongs to the bacterial ribosomal protein bL35 family.

In Synechococcus sp. (strain ATCC 27144 / PCC 6301 / SAUG 1402/1) (Anacystis nidulans), this protein is Large ribosomal subunit protein bL35.